A 749-amino-acid polypeptide reads, in one-letter code: Pectate disaccharide-lyase (749 aa).

The first 26 residues, 1–26, serve as a signal peptide directing secretion; the sequence is MKYAASGLLSVALNSLLLLGSNQRFA. Aspartate 538, aspartate 562, aspartate 563, and aspartate 566 together coordinate Ca(2+). Lysine 595 serves as the catalytic Proton acceptor.

This sequence belongs to the polysaccharide lyase 9 family. Requires Ca(2+) as cofactor.

It localises to the secreted. It carries out the reaction [(1-&gt;4)-alpha-D-galacturonosyl](n) = 4-(4-deoxy-alpha-D-galact-4-enuronosyl)-D-galacturonate + [(1-&gt;4)-alpha-D-galacturonosyl](n-2). Its activity is regulated as follows. Activity on pectate is nearly completely inhibited by ethyleneglycol-bis-(P-aminoethyl ether) N,N'-tetraacetic acid (EGTA), EDTA or nitrilotriacetic acid. Activity is specifically restored by the addition of Ca(2+). Its function is as follows. Exo-cleaving lyase that catalyzes the digestion of pectate. Contributes to pectate catabolism but not to bacterial virulence. In vitro can also use citrus pectin and highly methyl-esterified Link pectin as substrates. The protein is Pectate disaccharide-lyase of Dickeya chrysanthemi (Pectobacterium chrysanthemi).